The chain runs to 818 residues: Catenin beta (818 aa).

2 stretches are compositionally biased toward polar residues: residues 1 to 21 (METYQQMNSGSGPRSVGTPQG) and 48 to 66 (GDSGIQSGATTQAPPSVSS). Disordered regions lie at residues 1 to 24 (METYQQMNSGSGPRSVGTPQGQYM) and 48 to 71 (GDSGIQSGATTQAPPSVSSKHGLD). ARM repeat units follow at residues 164 to 203 (NYQDDADLATRAIPELTKLLNDEDQVVVSQAAMMVHQLSK), 248 to 287 (RQGLLTIFKSGGIPALVKLLSSPVESVLFYAITTLHNLLL), 412 to 451 (DAATKSSDIEGLLQMLVQLLASNDINIVTCAAGILSNLTC), 454 to 495 (QRNK…HLTS), 501 to 541 (EMAQ…NLAL), 543 to 582 (PANHAPLREHGAIPRIVQLLIRAHQDTQRRATAGSGNTSA), and 648 to 687 (KEGAEMIEQEGTTAPLTELLHSRNEGVATYAAAVLFRMSE). The interval 732–818 (QGFRGYQGSG…QMAAWFDTDL (87 aa)) is disordered.

It belongs to the beta-catenin family.

The protein localises to the cytoplasm. The protein resides in the cytoskeleton. In terms of biological role, binds to the cytoplasmic domain of the cell-cell adhesion molecule E-cadherin, and perhaps to other (membrane) proteins. The association of catenins to cadherins produces a complex which is linked to the actin filament network, and which seems to be of primary importance for cadherins cell-adhesion properties. The polypeptide is Catenin beta (Urechis caupo (Innkeeper worm)).